A 479-amino-acid polypeptide reads, in one-letter code: tRNA modification GTPase MnmE (479 aa).

Arg25, Glu82, and Lys134 together coordinate (6S)-5-formyl-5,6,7,8-tetrahydrofolate. Residues Gly230–Gly401 enclose the TrmE-type G domain. K(+) is bound at residue Asn240. Residues Asn240–Ser245, Thr259–Thr265, Asp284–Gly287, Asn352–Asp355, and Ser382–Arg384 each bind GTP. Position 244 (Ser244) interacts with Mg(2+). 3 residues coordinate K(+): Thr259, Ile261, and Thr264. Thr265 serves as a coordination point for Mg(2+). Lys479 is a (6S)-5-formyl-5,6,7,8-tetrahydrofolate binding site.

It belongs to the TRAFAC class TrmE-Era-EngA-EngB-Septin-like GTPase superfamily. TrmE GTPase family. Homodimer. Heterotetramer of two MnmE and two MnmG subunits. The cofactor is K(+).

It is found in the cytoplasm. Exhibits a very high intrinsic GTPase hydrolysis rate. Involved in the addition of a carboxymethylaminomethyl (cmnm) group at the wobble position (U34) of certain tRNAs, forming tRNA-cmnm(5)s(2)U34. In Leptothrix cholodnii (strain ATCC 51168 / LMG 8142 / SP-6) (Leptothrix discophora (strain SP-6)), this protein is tRNA modification GTPase MnmE.